Here is a 760-residue protein sequence, read N- to C-terminus: Histone-lysine N-methyltransferase EZH2 (760 aa).

Disordered regions lie at residues 208–231 (KDDAEDHKEQLSSESHNNDGSKKF) and 356–444 (PERA…PENV). The segment covering 361 to 373 (TPSKRSTGRRRGR) has biased composition (basic residues). The span at 375–388 (PNSNSRPSTPTVNS) shows a compositional bias: polar residues. A compositionally biased stretch (basic and acidic residues) spans 389 to 400 (ETKDTDSDREGG). A CXC domain is found at 517-619 (CRKIQLKKDG…SKNVSCKNCS (103 aa)). In terms of domain architecture, SET spans 626–741 (KHLLLAPSDV…TGEELFFDYR (116 aa)).

Belongs to the class V-like SAM-binding methyltransferase superfamily. Histone-lysine methyltransferase family. EZ subfamily. Component of the prc2/eed-ezh2 complex.

It is found in the nucleus. It carries out the reaction L-lysyl(27)-[histone H3] + 3 S-adenosyl-L-methionine = N(6),N(6),N(6)-trimethyl-L-lysyl(27)-[histone H3] + 3 S-adenosyl-L-homocysteine + 3 H(+). Polycomb group (PcG) protein. Catalytic subunit of the prc2/eed-ezh2 complex, which methylates 'Lys-9' and 'Lys-27' of histone H3, leading to transcriptional repression of the affected target gene. May regulate the circadian clock via histone methylation at the promoter of the circadian genes. The sequence is that of Histone-lysine N-methyltransferase EZH2 (ezh2) from Danio rerio (Zebrafish).